The primary structure comprises 244 residues: tRNA (guanine-N(7)-)-methyltransferase (244 aa).

Residues Glu-75, Glu-100, Asp-127, and Asp-150 each contribute to the S-adenosyl-L-methionine site. Asp-150 is a catalytic residue. Residues Lys-154, Asp-186, and 223–226 (TRFE) contribute to the substrate site.

It belongs to the class I-like SAM-binding methyltransferase superfamily. TrmB family.

It catalyses the reaction guanosine(46) in tRNA + S-adenosyl-L-methionine = N(7)-methylguanosine(46) in tRNA + S-adenosyl-L-homocysteine. It functions in the pathway tRNA modification; N(7)-methylguanine-tRNA biosynthesis. In terms of biological role, catalyzes the formation of N(7)-methylguanine at position 46 (m7G46) in tRNA. The polypeptide is tRNA (guanine-N(7)-)-methyltransferase (Xylella fastidiosa (strain 9a5c)).